Consider the following 838-residue polypeptide: Ribonuclease Z (838 aa).

Ser-824 carries the post-translational modification Phosphoserine.

Belongs to the RNase Z family. As to quaternary structure, homodimer. Zn(2+) serves as cofactor.

Its subcellular location is the cytoplasm. It is found in the nucleus. It catalyses the reaction Endonucleolytic cleavage of RNA, removing extra 3' nucleotides from tRNA precursor, generating 3' termini of tRNAs. A 3'-hydroxy group is left at the tRNA terminus and a 5'-phosphoryl group is left at the trailer molecule.. Its function is as follows. Zinc phosphodiesterase, which displays some tRNA 3'-processing endonuclease activity. Probably involved in tRNA maturation, by removing a 3'-trailer from precursor tRNA. The sequence is that of Ribonuclease Z (TRZ1) from Saccharomyces cerevisiae (strain ATCC 204508 / S288c) (Baker's yeast).